A 292-amino-acid polypeptide reads, in one-letter code: ATP synthase gamma chain (292 aa).

Belongs to the ATPase gamma chain family. In terms of assembly, F-type ATPases have 2 components, CF(1) - the catalytic core - and CF(0) - the membrane proton channel. CF(1) has five subunits: alpha(3), beta(3), gamma(1), delta(1), epsilon(1). CF(0) has three main subunits: a, b and c.

Its subcellular location is the cell inner membrane. Produces ATP from ADP in the presence of a proton gradient across the membrane. The gamma chain is believed to be important in regulating ATPase activity and the flow of protons through the CF(0) complex. This is ATP synthase gamma chain from Brucella anthropi (strain ATCC 49188 / DSM 6882 / CCUG 24695 / JCM 21032 / LMG 3331 / NBRC 15819 / NCTC 12168 / Alc 37) (Ochrobactrum anthropi).